A 473-amino-acid polypeptide reads, in one-letter code: ATP synthase subunit beta (473 aa).

An ATP-binding site is contributed by 158–165; it reads GGAGVGKT.

Belongs to the ATPase alpha/beta chains family. In terms of assembly, F-type ATPases have 2 components, CF(1) - the catalytic core - and CF(0) - the membrane proton channel. CF(1) has five subunits: alpha(3), beta(3), gamma(1), delta(1), epsilon(1). CF(0) has three main subunits: a(1), b(2) and c(9-12). The alpha and beta chains form an alternating ring which encloses part of the gamma chain. CF(1) is attached to CF(0) by a central stalk formed by the gamma and epsilon chains, while a peripheral stalk is formed by the delta and b chains.

It is found in the cell membrane. It carries out the reaction ATP + H2O + 4 H(+)(in) = ADP + phosphate + 5 H(+)(out). Functionally, produces ATP from ADP in the presence of a proton gradient across the membrane. The catalytic sites are hosted primarily by the beta subunits. The sequence is that of ATP synthase subunit beta from Bacillus pumilus (strain SAFR-032).